The chain runs to 202 residues: Ribonuclease HII (202 aa).

The region spanning 12-201 is the RNase H type-2 domain; it reads LLIAGVDEAG…VRQLKLFIPE (190 aa). A divalent metal cation contacts are provided by D18, E19, and D110.

This sequence belongs to the RNase HII family. Mn(2+) is required as a cofactor. Mg(2+) serves as cofactor.

The protein resides in the cytoplasm. The enzyme catalyses Endonucleolytic cleavage to 5'-phosphomonoester.. Functionally, endonuclease that specifically degrades the RNA of RNA-DNA hybrids. This is Ribonuclease HII from Coxiella burnetii (strain CbuG_Q212) (Coxiella burnetii (strain Q212)).